We begin with the raw amino-acid sequence, 630 residues long: Elongation factor 4 (630 aa).

Residues 1–22 (MTVARNRAGAGPGKGSPISSFA) form a disordered region. The tr-type G domain maps to 30 to 211 (ARIRNFCIIA…EVVRQVPAPV (182 aa)). Residues 42 to 47 (DHGKST) and 158 to 161 (NKID) each bind GTP.

This sequence belongs to the TRAFAC class translation factor GTPase superfamily. Classic translation factor GTPase family. LepA subfamily.

It localises to the cell membrane. It carries out the reaction GTP + H2O = GDP + phosphate + H(+). In terms of biological role, required for accurate and efficient protein synthesis under certain stress conditions. May act as a fidelity factor of the translation reaction, by catalyzing a one-codon backward translocation of tRNAs on improperly translocated ribosomes. Back-translocation proceeds from a post-translocation (POST) complex to a pre-translocation (PRE) complex, thus giving elongation factor G a second chance to translocate the tRNAs correctly. Binds to ribosomes in a GTP-dependent manner. In Rhodococcus jostii (strain RHA1), this protein is Elongation factor 4.